We begin with the raw amino-acid sequence, 516 residues long: GMP synthase [glutamine-hydrolyzing] (516 aa).

The Glutamine amidotransferase type-1 domain maps to 8-198 (KILILDFGSQ…VVNICGCDTL (191 aa)). Residue C84 is the Nucleophile of the active site. Catalysis depends on residues H172 and E174. A GMPS ATP-PPase domain is found at 199 to 391 (WNIENIIEND…LGLPYNMLYR (193 aa)). 226 to 232 (SGGVDSS) contacts ATP.

Homodimer.

It catalyses the reaction XMP + L-glutamine + ATP + H2O = GMP + L-glutamate + AMP + diphosphate + 2 H(+). It functions in the pathway purine metabolism; GMP biosynthesis; GMP from XMP (L-Gln route): step 1/1. Functionally, catalyzes the synthesis of GMP from XMP. The chain is GMP synthase [glutamine-hydrolyzing] from Francisella tularensis subsp. novicida (strain U112).